The primary structure comprises 433 residues: Pyroglutamylated RF-amide peptide receptor (433 aa).

The Extracellular portion of the chain corresponds to Met-1–Leu-46. N-linked (GlcNAc...) asparagine glycans are attached at residues Asn-5 and Asn-19. The chain crosses the membrane as a helical span at residues Ala-47–Ile-67. Topologically, residues Tyr-68–Asn-81 are cytoplasmic. The helical transmembrane segment at Ile-82–Thr-102 threads the bilayer. The Extracellular segment spans residues Met-103–Met-120. The chain crosses the membrane as a helical span at residues Val-121–Val-141. The Cytoplasmic portion of the chain corresponds to Glu-142–Ala-162. The helical transmembrane segment at Phe-163–Val-183 threads the bilayer. Over Gln-184–Arg-212 the chain is Extracellular. The helical transmembrane segment at Ile-213–Leu-233 threads the bilayer. Residues Tyr-234–Ala-271 are Cytoplasmic-facing. A helical transmembrane segment spans residues Val-272–Val-292. Topologically, residues His-293 to Val-313 are extracellular. Residues Phe-314–Phe-334 traverse the membrane as a helical segment. Over Met-335 to Leu-433 the chain is Cytoplasmic.

The protein belongs to the G-protein coupled receptor 1 family. Expressed widely in the brain with high levels in the cortex and hypothalamus, and moderate levels in the brain stem, caudate nucleus, midbrain hippocampus, thalamus, trigeminal ganglia and spinal cord. Particularly strong expression detected in the mitral cell layer of the olfactory bulb, accessory olfactory bulb, island of Calleja and nucleus of the solitary tract. In peripheral tissues, expressed at moderate levels in the eye, liver, kidney, pituitary gland, testis and thymus.

Its subcellular location is the cell membrane. Its function is as follows. Receptor for the orexigenic neuropeptide QRFP. The activity of this receptor is mediated by G proteins that modulate adenylate cyclase activity and intracellular calcium levels. The chain is Pyroglutamylated RF-amide peptide receptor (Qrfpr) from Mus musculus (Mouse).